Reading from the N-terminus, the 78-residue chain is Large ribosomal subunit protein bL28 (78 aa).

The interval 1-20 is disordered; the sequence is MSRVCQVTGKGPVTGNNISH.

Belongs to the bacterial ribosomal protein bL28 family.

The protein is Large ribosomal subunit protein bL28 of Pseudomonas putida (strain W619).